We begin with the raw amino-acid sequence, 1861 residues long: MLKAVLKKSREGGKGGKKEAGSDFGPETSPVLHLDHSADSPVSSLPTAEDTYRVSLAKGVSMSLPSSPLLPRQSHLVQSRVNKKSPGPVRKPKYVESPRVPGDAVIMPFREVAKPTEPDEHEAKADNEPSCSPAAQELLTRLGFLLGEGIPSATHITIEDKNETMCTALSQGISPCSTLTSSTASPSTDSPCSTLNSCVSKTAANKSPCETISSPSSTLESKDSGIIATITSSSENDDRSGSSLEWNKDGNLRLGVQKGVLHDRRADNCSPVAEEETTGSAESTLPKAESSAGDGPVPYSQGSSSLIMPRPNSVAATSSTKLEDLSYLDGQRNAPLRTSIRLPWHNTAGGRAQEVKARFAPYKPQDILLKPLLFEVPSITTDSVFVGRDWLFHQIEENLRNTELAENRGAVVVGNVGFGKTAIISKLVALSCHGSRMRQIASNSPGSSPKTSDPTQDLHFTPLLSPSSSTSASSTAKTPLGSISAENQRPREDAVKYLASKVVAYHYCQADNTYTCLVPEFVHSIAALLCRSHQLAAYRDLLIKEPQLQSMLSLRSCVQDPVAAFKRGVLEPLTNLRNEQKIPEEEYIILIDGLNEAEFHKPDYGDTLSSFITKIISKFPAWLKLIVTVRANFQEIISALPFVKLSLDDFPDNKDIHSDLHAYVQHRVHSSQDILSNISLNGKADATLIGKVSSHLVLRSLGSYLYLKLTLDLFQRGHLVIKSASYKVVPVSLSELYLLQCNMKFMTQSAFERALPILNVALASLHPMTDEQIFQAINAGHIQGEQGWEDFQQRMDALSCFLIKRRDKTRMFCHPSFREWLVWRADGENTAFLCEPRNGHALLAFMFSRQEGKLNRQQTMELGHHILKAHIFKGLSKKTGISSSHLQALWIGYSTEGLSAALASLRNLYTPNVKVSRLLILGGANVNYRTEVLNNAPILCVQSHLGHEEVVTLLLEFGACLDGTSENGMTALCYAAAAGHMKLVCLLTKKGVRVDHLDKKGQCALVHSALRGHGDILQYLLTCEWSPGPPQPGTLRKSHALQQALTAAASMGHSSVVQCLLGMEKEHEVEVNGTDTLWGETALTAAAGRGKLEVCELLLGHGAAVSRTNRRGVPPLFCAARQGHWQIVRLLLERGCDVNLSDKQGRTPLMVAACEGHLSTVEFLLSKGAALSSLDKEGLSALSWACLKGHRAVVQYLVEEGAAIDQTDKNGRTPLDLAAFYGDAETVLYLVEKGAVIEHVDHSGMRPLDRAIGCRNTSVVVALLRKGAKLGNAAWAMATSKPDILIILLQKLMEEGNVMYKKGKMKEAAQRYQYALRKFPREGFGEDMRPFNELRVSLYLNLSRCRRKTNDFGMAEEFASKALELKPKSYEAFYARARAKRNSRQFVAALADLQEAVKLCPTNQEVKRLLARVEEECKQLQRSQQQKQQGPLPAPLNDSENEEDTPTPGLSDHFHSEETEEEETSPQEESVSPTPRSQPSSSVPSSYIRNLQEGLQSKGRPVSPQSRAGIGKSLREPVAQPGLLLQPSKQAQIVKTSQHLGSGQSAVRNGSMKVQISSQNPPPSPMPGRIAATPAGSRTQHLEGTGTFTTRAGCGHFGDRLGPSQNVRLQCGENGPAHPLPSKTKTTERLLSHSSVAVDAAPPNQGGLATCSDVRHPASLTSSGSSGSPSSSIKMSSSTSSLTSSSSFSDGFKVQGPDTRIKDKVVTHVQSGTAEHRPRNTPFMGIMDKTARFQQQSNPPSRSWHCPAPEGLLTNTSSAAGLQSANTEKPSLMQVGGYNNQAKTCSVSTLSASVHNGAQVKELEESKCQIPVHSQENRITKTVSHLYQESISKQQPHISNEAHRSHLTAAKPKRSFIESNV.

M1 carries the N-acetylmethionine modification. 5 disordered regions span residues 1-46 (MLKA…SSLP), 63-99 (SLPS…ESPR), 206-225 (KSPC…KDSG), 257-311 (QKGV…MPRP), and 439-486 (QIAS…ISAE). Basic and acidic residues predominate over residues 8–21 (KSREGGKGGKKEAG). Phosphoserine is present on residues S63, S66, S67, S207, and S270. Positions 206–219 (KSPCETISSPSSTL) are enriched in polar residues. Residues 440 to 455 (IASNSPGSSPKTSDPT) show a composition bias toward polar residues. Over residues 461–480 (TPLLSPSSSTSASSTAKTPL) the composition is skewed to low complexity. S465 carries the post-translational modification Phosphoserine. ANK repeat units lie at residues 896-928 (EGLS…NVNY), 934-963 (NNAP…CLDG), 967-996 (NGMT…RVDH), 1000-1029 (KGQC…SPGP), 1040-1069 (ALQQ…EHEV), 1078-1107 (WGET…AVSR), 1111-1140 (RGVP…DVNL), 1144-1173 (QGRT…ALSS), 1177-1206 (EGLS…AIDQ), 1210-1239 (NGRT…VIEH), and 1243-1272 (SGMR…KLGN). TPR repeat units follow at residues 1289–1322 (LQKL…FPRE), 1336–1369 (VSLY…KPKS), and 1371–1403 (EAFY…CPTN). The segment covering 1421–1431 (QRSQQQKQQGP) has biased composition (low complexity). 2 disordered regions span residues 1421–1485 (QRSQ…SVPS) and 1636–1696 (VAVD…KVQG). S1439 is subject to Phosphoserine. Low complexity-rich tracts occupy residues 1467–1485 (QEES…SVPS) and 1659–1689 (SLTS…SSFS). Phosphoserine is present on residues S1668, S1676, and S1677.

This sequence belongs to the TANC family. As to quaternary structure, interacts probably directly with DLG1, DLG4, HOMER1. Interacts with DLGAP1, INA, CAMK2A, GRIN2B and GRIA1. Interacts with TNIK. Interacts with MINK1. Post-translationally, phosphorylated; by MINK1 and TNIK upon stimulation by RAP2A.

It localises to the postsynaptic density. May be a scaffold component in the postsynaptic density. In Homo sapiens (Human), this protein is Protein TANC1 (TANC1).